The primary structure comprises 305 residues: Nod factor export ATP-binding protein I (305 aa).

Positions 8–237 (IDLVGVRKSF…HIGCNVIEIY (230 aa)) constitute an ABC transporter domain. 40–47 (GPNGAGKS) lines the ATP pocket.

It belongs to the ABC transporter superfamily. Lipooligosaccharide exporter (TC 3.A.1.102) family. In terms of assembly, the complex is composed of two ATP-binding proteins (NodI) and two transmembrane proteins (NodJ).

The protein localises to the cell inner membrane. Functionally, part of the ABC transporter complex NodIJ involved in the export of the nodulation factors (Nod factors), the bacterial signal molecules that induce symbiosis and subsequent nodulation induction. Nod factors are LCO (lipo-chitin oligosaccharide), a modified beta-1,4-linked N-acetylglucosamine oligosaccharide. This subunit is responsible for energy coupling to the transport system. The chain is Nod factor export ATP-binding protein I from Bradyrhizobium sp. (strain SNU001).